Reading from the N-terminus, the 465-residue chain is Hepatocyte nuclear factor 6 (465 aa).

2 disordered regions span residues 15-84 (GVSH…GPLH) and 119-141 (SDKF…HQRL). Over residues 123–140 (PHHHHHHHHHHHPHHHQR) the composition is skewed to basic residues. Residues 283–369 (GSNSGQMEEI…QRMSALRLAA (87 aa)) constitute a DNA-binding region (CUT). Positions 385 to 444 (PKKPRLVFTDVQRRTLHAIFKENKRPSKELQITISQQLGLELSTVSNFFMNARRRSLDKW) form a DNA-binding region, homeobox. Residues 442–465 (DKWQDEGSSNSGNSSSSSSTCTKA) form a disordered region. Positions 448-465 (GSSNSGNSSSSSSTCTKA) are enriched in low complexity.

It belongs to the CUT homeobox family. As to quaternary structure, binds DNA as a monomer. Expressed in liver, brain, spleen and testis.

It localises to the nucleus. Functionally, transcriptional activator. Binds the consensus sequence 5'-DHWATTGAYTWWD-3' on a variety of gene promoters such as those of HNF3B and TTR. Important for liver genes transcription. The affinity of HNF-6-alpha and HNF-6-beta for DNA differs depending on the target sequence. The protein is Hepatocyte nuclear factor 6 (Onecut1) of Rattus norvegicus (Rat).